A 139-amino-acid chain; its full sequence is Arsenate reductase (139 aa).

Residues Cys-10, Cys-82, and Cys-89 each act as nucleophile in the active site. Intrachain disulfides connect Cys-10–Cys-82 and Cys-82–Cys-89.

It belongs to the low molecular weight phosphotyrosine protein phosphatase family. Thioredoxin-coupled ArsC subfamily.

The protein localises to the cytoplasm. The catalysed reaction is arsenate + [thioredoxin]-dithiol + H(+) = arsenite + [thioredoxin]-disulfide + H2O. Its function is as follows. Catalyzes the reduction of arsenate [As(V)] to arsenite [As(III)]. The chain is Arsenate reductase from Bacillus licheniformis (strain ATCC 14580 / DSM 13 / JCM 2505 / CCUG 7422 / NBRC 12200 / NCIMB 9375 / NCTC 10341 / NRRL NRS-1264 / Gibson 46).